A 222-amino-acid chain; its full sequence is Prolactin-2C5 (222 aa).

A signal peptide spans 1-29; that stretch reads MLPSLIQPCSWILLLLLVNSSLLWKNVAS. A disulfide bridge links Cys-33 with Cys-40. N-linked (GlcNAc...) asparagine glycosylation occurs at Asn-57. Cystine bridges form between Cys-87–Cys-197 and Cys-214–Cys-222.

Belongs to the somatotropin/prolactin family. In terms of processing, N-glycosylated and sialylated. As to expression, expressed in placenta (at protein level). Expressed in the tail hair follicle, with highest expression detected in the keratinocytes of the outer root sheath. Expressed in ear skin with lesser amounts in small intestine. Not detected in brain at 18 dpc, postnatal day 25 or postnatal day 55.

Its subcellular location is the secreted. In Mus musculus (Mouse), this protein is Prolactin-2C5.